A 162-amino-acid polypeptide reads, in one-letter code: NADH-quinone oxidoreductase subunit I (162 aa).

4Fe-4S ferredoxin-type domains lie at 54–83 (RRYE…IESE) and 93–122 (TRYD…ETQI). [4Fe-4S] cluster-binding residues include cysteine 63, cysteine 66, cysteine 69, cysteine 73, cysteine 102, cysteine 105, cysteine 108, and cysteine 112.

This sequence belongs to the complex I 23 kDa subunit family. In terms of assembly, NDH-1 is composed of 14 different subunits. Subunits NuoA, H, J, K, L, M, N constitute the membrane sector of the complex. Requires [4Fe-4S] cluster as cofactor.

Its subcellular location is the cell inner membrane. It carries out the reaction a quinone + NADH + 5 H(+)(in) = a quinol + NAD(+) + 4 H(+)(out). Functionally, NDH-1 shuttles electrons from NADH, via FMN and iron-sulfur (Fe-S) centers, to quinones in the respiratory chain. The immediate electron acceptor for the enzyme in this species is believed to be ubiquinone. Couples the redox reaction to proton translocation (for every two electrons transferred, four hydrogen ions are translocated across the cytoplasmic membrane), and thus conserves the redox energy in a proton gradient. The chain is NADH-quinone oxidoreductase subunit I from Burkholderia mallei (strain NCTC 10247).